The chain runs to 210 residues: Lysine N-acyltransferase MbtK (210 aa).

H130 is a binding site for substrate. The Proton acceptor role is filled by D168.

It belongs to the lysine N-acyltransferase MbtK family. As to quaternary structure, monomer.

Its pathway is siderophore biosynthesis; mycobactin biosynthesis. Its function is as follows. Acyltransferase required for the direct transfer of medium- to long-chain fatty acyl moieties from a carrier protein (MbtL) on to the epsilon-amino group of lysine residue in the mycobactin core. This Mycobacterium tuberculosis (strain CDC 1551 / Oshkosh) protein is Lysine N-acyltransferase MbtK (mbtK).